The chain runs to 436 residues: Hydrolyase ccsE (436 aa).

Ser249 (nucleophile) is an active-site residue.

It belongs to the AB hydrolase superfamily. FUS2 hydrolase family. Homodimer.

Its pathway is mycotoxin biosynthesis. Functionally, hydrolyase; part of the gene cluster that mediates the biosynthesis of a family of the mycotoxins cytochalasins E and K. The hybrid PKS-NRPS synthetase ccsA and the enoyl reductase ccsC are responsible for fusion of phenylalanine with an octaketide backbone and subsequent release of the stable tetramic acid precursor. The polyketide synthase module (PKS) of the PKS-NRPS ccsA is responsible for the synthesis of the octaketide backbone. The downstream nonribosomal peptide synthetase (NRPS) amidates the carboxyl end of the octaketide with a phenylalanine. A reductase-like domain (R) at the C-terminus catalyzes the reductive release of the polyketide-amino acid intermediate. Because ccsA lacks a designated enoylreductase (ER) domain, the required activity is provided the enoyl reductase ccsC. Upon formation of the 11-membered carbocycle-fused perhydroisoindolone intermediate, a number of oxidative steps are required to afford the final cytochalasin E and K, including two hydroxylations at C17 and C18, one alcohol oxidation at C17, one epoxidation at C6 and C7 and two Baeyer-Villiger oxidations. The oxidative modification at C17, C18 and the C6-C7 epoxidation are likely to be catalyzed by the two cytochrome P450 oxygenases ccsD and ccsG. CcsD may be responsible for the epoxidation of the C6-C7 double bond. CcsG may be responsible for the successive oxidative modifications at C17 and C18. The double Baeyer-Villiger oxidations of ketocytochalasin to precytochalasin and cytochalasin Z(16) are among the final steps leading to cytochalasin E and K and are catalyzed by ccsB. The first oxygen insertion step follows that of the classic BVMO mechanism, generating the ester precytochalasin. Release of precytochalasin into an aqueous environment can generate the shunt product iso-precytochalasin through spontaneous isomerization. Alternatively, precytochalasin can undergo further oxidation by ccsB to yield the in-line carbonate-containing cytochalasin Z(16). Cytochalasin Z(16) is a precursor to cytochalasin E and cytochalasin K, whereas iso-precytochalasin is a precursor to cytochalasin Z(17) and rosellichalasin. The hydrolyase ccsE may catalyze hydrolysis of epoxide bond in cytochalasin E to afford cytochalasin K. The function of ccsF has not been assigned but it may play a role in post-PKS-NRPS biosynthetic step, resistance or transport of cytochalasins and related PKS-NRPS products. In Aspergillus clavatus (strain ATCC 1007 / CBS 513.65 / DSM 816 / NCTC 3887 / NRRL 1 / QM 1276 / 107), this protein is Hydrolyase ccsE.